The primary structure comprises 338 residues: Pyridoxal 5'-phosphate synthase subunit PdxS (338 aa).

Residue Asp66 participates in D-ribose 5-phosphate binding. Lys123 serves as the catalytic Schiff-base intermediate with D-ribose 5-phosphate. Gly195 serves as a coordination point for D-ribose 5-phosphate. Position 207 (Lys207) interacts with D-glyceraldehyde 3-phosphate. D-ribose 5-phosphate contacts are provided by residues Gly256 and Gly277 to Ser278.

It belongs to the PdxS/SNZ family. In the presence of PdxT, forms a dodecamer of heterodimers.

The enzyme catalyses aldehydo-D-ribose 5-phosphate + D-glyceraldehyde 3-phosphate + L-glutamine = pyridoxal 5'-phosphate + L-glutamate + phosphate + 3 H2O + H(+). Its pathway is cofactor biosynthesis; pyridoxal 5'-phosphate biosynthesis. In terms of biological role, catalyzes the formation of pyridoxal 5'-phosphate from ribose 5-phosphate (RBP), glyceraldehyde 3-phosphate (G3P) and ammonia. The ammonia is provided by the PdxT subunit. Can also use ribulose 5-phosphate and dihydroxyacetone phosphate as substrates, resulting from enzyme-catalyzed isomerization of RBP and G3P, respectively. This is Pyridoxal 5'-phosphate synthase subunit PdxS from Saccharolobus islandicus (strain L.S.2.15 / Lassen #1) (Sulfolobus islandicus).